Here is a 106-residue protein sequence, read N- to C-terminus: Immunoglobulin lambda constant 6 (106 aa).

Residues Pro-7–Ala-101 enclose the Ig-like domain. Cys-28 and Cys-87 are joined by a disulfide.

As to quaternary structure, immunoglobulins are composed of two identical heavy chains and two identical light chains; disulfide-linked.

The protein resides in the secreted. It localises to the cell membrane. Functionally, constant region of immunoglobulin light chains. Immunoglobulins, also known as antibodies, are membrane-bound or secreted glycoproteins produced by B lymphocytes. In the recognition phase of humoral immunity, the membrane-bound immunoglobulins serve as receptors which, upon binding of a specific antigen, trigger the clonal expansion and differentiation of B lymphocytes into immunoglobulins-secreting plasma cells. Secreted immunoglobulins mediate the effector phase of humoral immunity, which results in the elimination of bound antigens. The antigen binding site is formed by the variable domain of one heavy chain, together with that of its associated light chain. Thus, each immunoglobulin has two antigen binding sites with remarkable affinity for a particular antigen. The variable domains are assembled by a process called V-(D)-J rearrangement and can then be subjected to somatic hypermutations which, after exposure to antigen and selection, allow affinity maturation for a particular antigen. The chain is Immunoglobulin lambda constant 6 from Homo sapiens (Human).